A 125-amino-acid chain; its full sequence is Fluoride-specific ion channel FluC (125 aa).

4 helical membrane passes run Trp-2 to Phe-22, Leu-35 to Phe-55, Leu-68 to Val-88, and Trp-98 to Ile-118. Residues Gly-75 and Thr-78 each contribute to the Na(+) site.

Belongs to the fluoride channel Fluc/FEX (TC 1.A.43) family.

The protein localises to the cell inner membrane. It carries out the reaction fluoride(in) = fluoride(out). With respect to regulation, na(+) is not transported, but it plays an essential structural role and its presence is essential for fluoride channel function. Its function is as follows. Fluoride-specific ion channel. Important for reducing fluoride concentration in the cell, thus reducing its toxicity. The chain is Fluoride-specific ion channel FluC from Polynucleobacter asymbioticus (strain DSM 18221 / CIP 109841 / QLW-P1DMWA-1) (Polynucleobacter necessarius subsp. asymbioticus).